Consider the following 198-residue polypeptide: MVNYPHQISRKIAQVRTKKSNRVDFANRGMNFESAINATNDYYLSRGLAVIHKKPTPVQIVKVDYPKRSRAKIVEAYFRQASTTDYSGVYKGYYIDFEAKETRQKTSMPMKNFHAHQIKHMSQVINQDGICFVLLHFSTLKETYLLPAKDLIAFYQIDKGTKSMPLDYIKKRGYAIAESAYPQVPYLEIIEKLLGGNT.

Mg(2+)-binding residues include Thr-83, Asp-85, Glu-98, and Gln-117.

It belongs to the RecU family. Mg(2+) is required as a cofactor.

Its subcellular location is the cytoplasm. The enzyme catalyses Endonucleolytic cleavage at a junction such as a reciprocal single-stranded crossover between two homologous DNA duplexes (Holliday junction).. In terms of biological role, endonuclease that resolves Holliday junction intermediates in genetic recombination. Cleaves mobile four-strand junctions by introducing symmetrical nicks in paired strands. Promotes annealing of linear ssDNA with homologous dsDNA. Required for DNA repair, homologous recombination and chromosome segregation. This Streptococcus thermophilus (strain CNRZ 1066) protein is Holliday junction resolvase RecU.